The following is a 214-amino-acid chain: Large ribosomal subunit protein uL6m (214 aa).

A mitochondrion-targeting transit peptide spans 1-16 (MSFIQRRLLSQTLFLR).

The protein belongs to the universal ribosomal protein uL6 family. In terms of assembly, component of the mitochondrial large ribosomal subunit (mt-LSU). Mature yeast 74S mitochondrial ribosomes consist of a small (37S) and a large (54S) subunit. The 37S small subunit contains a 15S ribosomal RNA (15S mt-rRNA) and 34 different proteins. The 54S large subunit contains a 21S rRNA (21S mt-rRNA) and 46 different proteins.

It is found in the mitochondrion. Its function is as follows. Component of the mitochondrial ribosome (mitoribosome), a dedicated translation machinery responsible for the synthesis of mitochondrial genome-encoded proteins, including at least some of the essential transmembrane subunits of the mitochondrial respiratory chain. The mitoribosomes are attached to the mitochondrial inner membrane and translation products are cotranslationally integrated into the membrane. This is Large ribosomal subunit protein uL6m (MRPL6) from Saccharomyces cerevisiae (strain ATCC 204508 / S288c) (Baker's yeast).